Reading from the N-terminus, the 295-residue chain is Excinuclease cho (295 aa).

In terms of domain architecture, GIY-YIG spans 33-108 (TRPGVYLFHG…IKEQQPLFNK (76 aa)).

Functionally, incises the DNA at the 3' side of a lesion during nucleotide excision repair. Incises the DNA farther away from the lesion than UvrC. Not able to incise the 5' site of a lesion. In vitro, the incision activity of Cho is UvrA and UvrB dependent. When a lesion remains because UvrC is not able to induce the 3' incision, Cho incises the DNA. Then UvrC makes the 5' incision. The combined action of Cho and UvrC broadens the substrate range of nucleotide excision repair. This chain is Excinuclease cho (cho), found in Escherichia coli (strain K12).